The sequence spans 262 residues: [LysW]-aminoadipate/[LysW]-glutamate kinase (262 aa).

Substrate contacts are provided by residues Gly35–Gly36, Arg62, and Asn167.

Belongs to the acetylglutamate kinase family. LysZ subfamily.

The protein resides in the cytoplasm. It carries out the reaction [amino-group carrier protein]-C-terminal-N-(1,4-dicarboxybutan-1-yl)-L-glutamine + ATP = [amino-group carrier protein]-C-terminal-N-(1-carboxy-5-phosphooxy-5-oxopentan-1-yl)-L-glutamine + ADP. The enzyme catalyses [amino-group carrier protein]-C-terminal-gamma-(L-glutamyl)-L-glutamate + ATP = [amino-group carrier protein]-C-terminal-gamma-(5-phospho-L-glutamyl)-L-glutamate + ADP. It participates in amino-acid biosynthesis; L-lysine biosynthesis via AAA pathway; L-lysine from L-alpha-aminoadipate (Thermus route): step 2/5. The protein operates within amino-acid biosynthesis; L-arginine biosynthesis. In terms of biological role, involved in both the arginine and lysine biosynthetic pathways. Phosphorylates the LysW-bound precursors glutamate (for arginine biosynthesis), respectively alpha-aminoadipate (for lysine biosynthesis). In Metallosphaera sedula (strain ATCC 51363 / DSM 5348 / JCM 9185 / NBRC 15509 / TH2), this protein is [LysW]-aminoadipate/[LysW]-glutamate kinase.